A 738-amino-acid polypeptide reads, in one-letter code: Ethylene receptor 1 (738 aa).

Transmembrane regions (helical) follow at residues 23–43 (ISDF…IYFV), 53–73 (WVLV…LINL), and 92–112 (VLTA…IPDL). Cu cation-binding residues include cysteine 65 and histidine 69. In terms of domain architecture, GAF spans 158–307 (DRHTILKTTL…VVADQVAVAL (150 aa)). Residues 350–585 (VMNHEMRTPM…IFDVKLGISE (236 aa)) form the Histidine kinase domain. Residue histidine 353 is modified to Phosphohistidine; by autocatalysis. Residues 470–473 (NAVK), aspartate 513, lysine 529, serine 544, and leucine 548 each bind ADP. The 119-residue stretch at 611 to 729 (KVLVMDENGV…NIRDVLSDLL (119 aa)) folds into the Response regulatory domain. Residue aspartate 659 is modified to 4-aspartylphosphate. A Glycyl lysine isopeptide (Lys-Gly) (interchain with G-Cter in ubiquitin) cross-link involves residue lysine 714.

The protein belongs to the ethylene receptor family. As to quaternary structure, homodimer; disulfide-linked. Heteromer with ERS1, ERS2, ETR2 and EIN4. Interacts with AHP1, AHP2 and AHP3. Interacts with RTE1. Interacts with EIN2. Cu cation is required as a cofactor. Post-translationally, autophosphorylated. Phosphorylation at His-353 modulates the interaction with EIN2. In terms of tissue distribution, leaves, roots, stems, seedlings, flowers, anthers, carpels and ovules.

It localises to the endoplasmic reticulum membrane. It carries out the reaction ATP + protein L-histidine = ADP + protein N-phospho-L-histidine.. Its function is as follows. Ethylene receptor related to bacterial two-component regulators. Acts as a redundant negative regulator of ethylene signaling. In the presence of ethylene, the auto-kinase activity of ETR1 is inhibited and the non-phosphorylated kinase domain binds tightly to the corresponding domain of EIN2. The chain is Ethylene receptor 1 from Arabidopsis thaliana (Mouse-ear cress).